The following is a 532-amino-acid chain: Probable bifunctional tRNA threonylcarbamoyladenosine biosynthesis protein (532 aa).

The interval 1–323 (MRVLGVEGTA…FRPDEVSVTW (323 aa)) is kae1. Fe cation is bound by residues H107 and H111. Residues 128-132 (NASGA), D160, G173, E177, and N256 contribute to the L-threonylcarbamoyladenylate site. D284 is a Fe cation binding site. The Protein kinase domain occupies 329 to 532 (PARDPGADAV…GRYQDDPETA (204 aa)). ATP is bound by residues 338–346 (VRQGAEATV) and K355. Residue D444 is the Proton acceptor; for kinase activity of the active site.

This sequence in the N-terminal section; belongs to the KAE1 / TsaD family. The protein in the C-terminal section; belongs to the protein kinase superfamily. Tyr protein kinase family. BUD32 subfamily. Component of the KEOPS complex that consists of Kae1, Bud32, Cgi121 and Pcc1; the whole complex dimerizes. Fe(2+) serves as cofactor.

The protein localises to the cytoplasm. It carries out the reaction L-seryl-[protein] + ATP = O-phospho-L-seryl-[protein] + ADP + H(+). The catalysed reaction is L-threonyl-[protein] + ATP = O-phospho-L-threonyl-[protein] + ADP + H(+). It catalyses the reaction L-threonylcarbamoyladenylate + adenosine(37) in tRNA = N(6)-L-threonylcarbamoyladenosine(37) in tRNA + AMP + H(+). Its function is as follows. Required for the formation of a threonylcarbamoyl group on adenosine at position 37 (t(6)A37) in tRNAs that read codons beginning with adenine. Is a component of the KEOPS complex that is probably involved in the transfer of the threonylcarbamoyl moiety of threonylcarbamoyl-AMP (TC-AMP) to the N6 group of A37. The Kae1 domain likely plays a direct catalytic role in this reaction. The Bud32 domain probably displays kinase activity that regulates Kae1 function. The sequence is that of Probable bifunctional tRNA threonylcarbamoyladenosine biosynthesis protein from Halobacterium salinarum (strain ATCC 700922 / JCM 11081 / NRC-1) (Halobacterium halobium).